Here is a 545-residue protein sequence, read N- to C-terminus: Chaperonin GroEL (545 aa).

ATP-binding positions include 30-33, lysine 51, 87-91, glycine 415, and aspartate 495; these read TLGP and DGTTT.

It belongs to the chaperonin (HSP60) family. In terms of assembly, forms a cylinder of 14 subunits composed of two heptameric rings stacked back-to-back. Interacts with the co-chaperonin GroES.

It is found in the cytoplasm. It catalyses the reaction ATP + H2O + a folded polypeptide = ADP + phosphate + an unfolded polypeptide.. Its function is as follows. Together with its co-chaperonin GroES, plays an essential role in assisting protein folding. The GroEL-GroES system forms a nano-cage that allows encapsulation of the non-native substrate proteins and provides a physical environment optimized to promote and accelerate protein folding. This Shewanella sp. (strain ANA-3) protein is Chaperonin GroEL.